Here is a 620-residue protein sequence, read N- to C-terminus: Chaperone protein HscA homolog (620 aa).

It belongs to the heat shock protein 70 family.

In terms of biological role, chaperone involved in the maturation of iron-sulfur cluster-containing proteins. Has a low intrinsic ATPase activity which is markedly stimulated by HscB. This is Chaperone protein HscA homolog from Paracidovorax citrulli (strain AAC00-1) (Acidovorax citrulli).